The chain runs to 100 residues: Small ribosomal subunit protein uS14c (100 aa).

The protein belongs to the universal ribosomal protein uS14 family. Part of the 30S ribosomal subunit.

It is found in the plastid. The protein resides in the chloroplast. Binds 16S rRNA, required for the assembly of 30S particles. This chain is Small ribosomal subunit protein uS14c, found in Carica papaya (Papaya).